Consider the following 161-residue polypeptide: Regulator of ribonuclease activity A (161 aa).

This sequence belongs to the RraA family. Homotrimer. Binds to both RNA-binding sites in the C-terminal region of Rne and to RhlB.

It localises to the cytoplasm. Its function is as follows. Globally modulates RNA abundance by binding to RNase E (Rne) and regulating its endonucleolytic activity. Can modulate Rne action in a substrate-dependent manner by altering the composition of the degradosome. Modulates RNA-binding and helicase activities of the degradosome. The protein is Regulator of ribonuclease activity A of Shigella flexneri serotype 5b (strain 8401).